The primary structure comprises 2008 residues: Histone-lysine N-methyltransferase SETD1B (2008 aa).

Basic and acidic residues predominate over residues 1 to 20 (MSFREIKAGEKAKHPEDHGK). The tract at residues 1-42 (MSFREIKAGEKAKHPEDHGKKQSSSWINGMENSTQASTSVEK) is disordered. Residues 22-39 (QSSSWINGMENSTQASTS) are compositionally biased toward polar residues. In terms of domain architecture, RRM spans 111–199 (DEFYVGPVPP…NIIHVELDTK (89 aa)). Disordered stretches follow at residues 249–390 (NLSS…SSYK), 402–652 (FPQS…APIT), 682–725 (PPGF…PPLP), 950–1172 (RKEP…DKRE), 1309–1328 (TKLPSAVEEEDRLPRTPGRE), 1345–1461 (VPSS…FTPT), 1563–1600 (VGASILPPPPPHSVLPKRRPGRPRRSPPSVLSLDMYSG), 1674–1712 (KEEEAHAKPKRQWRRQKKSPEHLPVIPSPEYSPPQPQFR), and 1814–1842 (EEPPADTQGMSIPAQPHASTRAGSERRSE). Residues 251–264 (SSVGSSVTPNSSTP) are compositionally biased toward low complexity. Composition is skewed to polar residues over residues 265–293 (FSHDTAYSSCRQDTPNSFSQFTPQSQGTP), 301–315 (PFSQDSTYSSRQTTP), 360–381 (HQFSTFKSHQQEPVQFSHTPPL), 405–414 (SEEQPFAQTS), and 456–491 (DSNSAPEPSAPSFSQTPERSETPGTPTMESEMQHNS). Positions 492–521 (LDSRIEMLLKEQRTKLPFLNEHDSDNEVRM) are enriched in basic and acidic residues. Positions 524–537 (SPISSSSSQLSPIP) are enriched in low complexity. Polar residues-rich tracts occupy residues 540 to 560 (GSNSQPGYRAQTPSSRPSSTG) and 582 to 604 (ASLNQNSRGTSEASMTPIDQLNR). Basic and acidic residues-rich tracts occupy residues 606–617 (SKVETLEVKEMV) and 626–636 (EKMDESQHSSG). Residues 637-646 (EDMEISDDEM) are compositionally biased toward acidic residues. Residues 979–997 (ERDRDASDTTSDLSKKDAE) show a composition bias toward basic and acidic residues. Positions 1011–1020 (LDSEGEEGDE) are enriched in acidic residues. Residues 1021-1031 (TSGKEEESSSE) show a composition bias toward basic and acidic residues. Acidic residues-rich tracts occupy residues 1050 to 1094 (EEEE…EEDA) and 1105 to 1149 (ESSD…EDQD). Positions 1150–1172 (REAMVAETEHEPASHELPDDKRE) are enriched in basic and acidic residues. Over residues 1345–1356 (VPSSTVPLPSTP) the composition is skewed to low complexity. The segment covering 1378–1392 (SIEEEIPRTPGRDIL) has biased composition (basic and acidic residues). Residues 1418–1427 (LTGSSLTLSS) show a composition bias toward low complexity. Basic residues-rich tracts occupy residues 1577-1587 (LPKRRPGRPRR) and 1681-1690 (KPKRQWRRQK). Residues 1699-1710 (IPSPEYSPPQPQ) are compositionally biased toward pro residues. Positions 1840–1845 (RSEQRR) match the RxxxRR motif motif. The SET domain maps to 1869-1986 (KKLKFCKSHI…VNEEITYDYK (118 aa)). Tyrosine 1985 provides a ligand contact to S-adenosyl-L-methionine. The region spanning 1992–2008 (VKIPCLCGSENCRGTLN) is the Post-SET domain.

The protein belongs to the class V-like SAM-binding methyltransferase superfamily. Component of the SET1B/COMPASS complex.

It is found in the nucleus speckle. Its subcellular location is the chromosome. The enzyme catalyses L-lysyl(4)-[histone H3] + 3 S-adenosyl-L-methionine = N(6),N(6),N(6)-trimethyl-L-lysyl(4)-[histone H3] + 3 S-adenosyl-L-homocysteine + 3 H(+). In terms of biological role, histone methyltransferase that specifically methylates 'Lys-4' of histone H3, when part of the SET1 histone methyltransferase (HMT) complex, but not if the neighboring 'Lys-9' residue is already methylated. H3 'Lys-4' methylation represents a specific tag for epigenetic transcriptional activation. In Gallus gallus (Chicken), this protein is Histone-lysine N-methyltransferase SETD1B (SETD1B).